The chain runs to 422 residues: UPF0761 membrane protein XAC0937 (422 aa).

6 helical membrane-spanning segments follow: residues 45–65 (VFAL…FPAF), 102–122 (FTVA…HSIE), 151–171 (GTML…LPLF), 179–199 (LAEF…IVLI), 213–233 (ALPG…GFGF), and 247–267 (ALSA…SVLL).

This sequence belongs to the UPF0761 family.

It localises to the cell inner membrane. The sequence is that of UPF0761 membrane protein XAC0937 from Xanthomonas axonopodis pv. citri (strain 306).